The primary structure comprises 271 residues: Thermoregulatory protein LcrF (271 aa).

The 99-residue stretch at 167–265 (ERLQKFMEEN…GCTPSQARLT (99 aa)) folds into the HTH araC/xylS-type domain. DNA-binding regions (H-T-H motif) lie at residues 184-205 (SKFAREFGMGLTTFKELFGTVY) and 232-255 (IVDIAMEAGFSSQSYFTQSYRRRF).

Transcriptional activator of the thermally regulated virulent yopE gene. LcrF activity could be modulated by the interaction with an inducer molecule serving as a temperature messenger. The availability of the messenger would in turn be controlled by a temperature-responsive process serving as a cellular thermometer. The polypeptide is Thermoregulatory protein LcrF (lcrF) (Yersinia pestis).